A 137-amino-acid chain; its full sequence is Large ribosomal subunit protein uL16 (137 aa).

This sequence belongs to the universal ribosomal protein uL16 family. In terms of assembly, part of the 50S ribosomal subunit.

Its function is as follows. Binds 23S rRNA and is also seen to make contacts with the A and possibly P site tRNAs. The chain is Large ribosomal subunit protein uL16 from Hydrogenovibrio crunogenus (strain DSM 25203 / XCL-2) (Thiomicrospira crunogena).